We begin with the raw amino-acid sequence, 225 residues long: Dimerizing cyclase tstC (225 aa).

The N-terminal stretch at 1-19 (MRLSTLSSLLLGSSSIVFA) is a signal peptide. 3 N-linked (GlcNAc...) asparagine glycosylation sites follow: asparagine 146, asparagine 195, and asparagine 217.

It belongs to the dimerizing cyclase tstC family.

The catalysed reaction is 2 [4-(deca-1,8-diyl)-2,5-dioxo-2,5-dihydro-3-furanyl]acetate + H(+) = 2-[(1R,8S,14R,15R)-11-hydroxy-14,15-bis[(6E)-oct-6-en-1-yl]-3,5,9-trioxo-4,10-dioxatetracyclo[9.4.0.0(2,6).0(8,12)]pentadeca-2(6),12-dien-8-yl]acetate + CO2. The protein operates within secondary metabolite biosynthesis. Its function is as follows. Dimerizing cyclase; part of the gene cluster that mediates the biosynthesis of the antihypercholesterolemic agents phomoidrides which are dimeric anhydrides. Within the pathway, tstC produces the bicyclo[4.3.1]deca-1,6-diene core of phomoidrides via the dimerization of the monomeric anhydrides leading to prephomoidride. The pathway begins with the highly reducing polyketide synthase tstA that catalyzes the formation of a C12-fatty acyl-ACP, starting from one acetate and 5 malonate units. The hydrolase tstM is involved in the release of the C12-fatty acyl chain from phiA. The alkylcitrate synthase (ACS) tstJ and the alkylcitrate dehydratase (ACDH) tstI then give rise to decarboxylated monomeric anhydrides by coupling the C12-fatty acyl chain with oxalacetic acid. The cyclase tstC is responsible for the dimerization of the monomeric anhydrides which leads to the production of prephomoidride that contains the characteristic bicyclo[4.3.1]deca-1,6-diene system of phomoidrides. Iterative oxidation catalyzed by the alpha-ketoglutarate-dependent dioxygenase tstK produced then phomoidride A. Finally, the methyltransferase tstE converts phomoidride A to phomoidride B via an acetalization reaction. The phosphatidylethanolamine-binding protein tstB and tstN are not essential for dimerization and their functions have still to be determined. The chain is Dimerizing cyclase tstC from Talaromyces stipitatus (strain ATCC 10500 / CBS 375.48 / QM 6759 / NRRL 1006) (Penicillium stipitatum).